Here is a 265-residue protein sequence, read N- to C-terminus: Probable FAD synthase (265 aa).

The protein belongs to the PAPS reductase family. FAD1 subfamily.

The catalysed reaction is FMN + ATP + H(+) = FAD + diphosphate. It functions in the pathway cofactor biosynthesis; FAD biosynthesis; FAD from FMN: step 1/1. Functionally, adenylates FMN to FAD. The sequence is that of Probable FAD synthase from Schizosaccharomyces pombe (strain 972 / ATCC 24843) (Fission yeast).